Reading from the N-terminus, the 431-residue chain is Adenylosuccinate synthetase (431 aa).

Residues 13–19 (GDEGKGK) and 41–43 (GHT) each bind GTP. Catalysis depends on aspartate 14, which acts as the Proton acceptor. Positions 14 and 41 each coordinate Mg(2+). IMP-binding positions include 14-17 (DEGK), 39-42 (NAGH), threonine 130, arginine 144, glutamine 225, threonine 240, and arginine 304. The active-site Proton donor is histidine 42. 300 to 306 (TTTGRSR) lines the substrate pocket. GTP is bound by residues arginine 306, 332 to 334 (KLD), and 414 to 416 (STG).

Belongs to the adenylosuccinate synthetase family. Homodimer. Mg(2+) serves as cofactor.

Its subcellular location is the cytoplasm. It catalyses the reaction IMP + L-aspartate + GTP = N(6)-(1,2-dicarboxyethyl)-AMP + GDP + phosphate + 2 H(+). The protein operates within purine metabolism; AMP biosynthesis via de novo pathway; AMP from IMP: step 1/2. Functionally, plays an important role in the de novo pathway of purine nucleotide biosynthesis. Catalyzes the first committed step in the biosynthesis of AMP from IMP. The chain is Adenylosuccinate synthetase from Marinobacter nauticus (strain ATCC 700491 / DSM 11845 / VT8) (Marinobacter aquaeolei).